The sequence spans 255 residues: Na(+)-translocating NADH-quinone reductase subunit C (255 aa).

Residues 11-31 (LGVVVGLSLVCSIIVSTAAVG) form a helical membrane-spanning segment. At T223 the chain carries FMN phosphoryl threonine.

The protein belongs to the NqrC family. In terms of assembly, composed of six subunits; NqrA, NqrB, NqrC, NqrD, NqrE and NqrF. It depends on FMN as a cofactor.

The protein localises to the cell inner membrane. The catalysed reaction is a ubiquinone + n Na(+)(in) + NADH + H(+) = a ubiquinol + n Na(+)(out) + NAD(+). NQR complex catalyzes the reduction of ubiquinone-1 to ubiquinol by two successive reactions, coupled with the transport of Na(+) ions from the cytoplasm to the periplasm. NqrA to NqrE are probably involved in the second step, the conversion of ubisemiquinone to ubiquinol. This Vibrio vulnificus (strain CMCP6) protein is Na(+)-translocating NADH-quinone reductase subunit C.